A 746-amino-acid polypeptide reads, in one-letter code: Centromere protein I (746 aa).

A disordered region spans residues 1–24 (MATQRVTRNSQQQNRISQGSNSRQ).

It belongs to the CENP-I/CTF3 family. Component of the CENPA-CAD complex, composed of CENPI, CENPK, CENPL, CENPO, CENPP, CENPQ, CENPR and CENPS. The CENPA-CAD complex interacts with the CENPA-NAC complex, at least composed of CENPA, CENPC, CENPH, CENPM, CENPN, CENPT and CENPU. Interacts with SENP6. In terms of processing, sumoylated. Sumoylated form can be polyubiquitinated by RNF4, leading to its degradation. Desumoylation by SENP6 prevents its degradation.

The protein resides in the nucleus. The protein localises to the chromosome. It is found in the centromere. In terms of biological role, component of the CENPA-CAD (nucleosome distal) complex, a complex recruited to centromeres which is involved in assembly of kinetochore proteins, mitotic progression and chromosome segregation. May be involved in incorporation of newly synthesized CENPA into centromeres via its interaction with the CENPA-NAC complex. Required for the localization of CENPF, MAD1L1 and MAD2 (MAD2L1 or MAD2L2) to kinetochores. Involved in the response of gonadal tissues to follicle-stimulating hormone. The chain is Centromere protein I (Cenpi) from Mus musculus (Mouse).